Reading from the N-terminus, the 992-residue chain is Exportin-T (992 aa).

The protein belongs to the exportin family.

The protein localises to the nucleus. It is found in the cytoplasm. Its function is as follows. tRNA nucleus export receptor which facilitates tRNA translocation across the nuclear pore complex. Involved in pre-tRNA splicing, probably by affecting the interaction of pre-tRNA with splicing endonuclease. This Scheffersomyces stipitis (strain ATCC 58785 / CBS 6054 / NBRC 10063 / NRRL Y-11545) (Yeast) protein is Exportin-T (LOS1).